Here is a 212-residue protein sequence, read N- to C-terminus: MLNGILGRKIGMTQIFTEKGETIPVTVIEAGPCVVTQLRTKDKDGYEAVQLGFGEIKPRKVTKPIQGHLKAAGRLVRFMREVKTTDLNAHNVGDVVNVDIFQIGEKIDVVGTSKGRGFAGVVKRHGFRGGPATHGQSDRHRAPGSIGSGTTPGRVWKNMRMAGRMGNDRVTVQNLEVVKIDLERHVILVKGSVPGAKNGLVMVSRAAKATKK.

Residues 127 to 153 (FRGGPATHGQSDRHRAPGSIGSGTTPG) form a disordered region.

It belongs to the universal ribosomal protein uL3 family. In terms of assembly, part of the 50S ribosomal subunit. Forms a cluster with proteins L14 and L19.

Its function is as follows. One of the primary rRNA binding proteins, it binds directly near the 3'-end of the 23S rRNA, where it nucleates assembly of the 50S subunit. The chain is Large ribosomal subunit protein uL3 from Herpetosiphon aurantiacus (strain ATCC 23779 / DSM 785 / 114-95).